The following is a 238-amino-acid chain: Lactate utilization protein A (238 aa).

This sequence belongs to the LutA/YkgE family.

Its function is as follows. Is involved in L-lactate degradation and allows cells to grow with lactate as the sole carbon source. This Bacillus velezensis (strain DSM 23117 / BGSC 10A6 / LMG 26770 / FZB42) (Bacillus amyloliquefaciens subsp. plantarum) protein is Lactate utilization protein A.